An 80-amino-acid polypeptide reads, in one-letter code: Exodeoxyribonuclease 7 small subunit (80 aa).

Belongs to the XseB family. As to quaternary structure, heterooligomer composed of large and small subunits.

It localises to the cytoplasm. The enzyme catalyses Exonucleolytic cleavage in either 5'- to 3'- or 3'- to 5'-direction to yield nucleoside 5'-phosphates.. Its function is as follows. Bidirectionally degrades single-stranded DNA into large acid-insoluble oligonucleotides, which are then degraded further into small acid-soluble oligonucleotides. This chain is Exodeoxyribonuclease 7 small subunit, found in Pseudomonas fluorescens (strain Pf0-1).